The following is a 453-amino-acid chain: Bifunctional protein GlmU (453 aa).

The interval 1–226 is pyrophosphorylase; it reads MVAVAILAAG…YLEITGINDR (226 aa). UDP-N-acetyl-alpha-D-glucosamine contacts are provided by residues 7–10, Lys-21, Gln-73, and 78–79; these read LAAG and GT. Position 103 (Asp-103) interacts with Mg(2+). Gly-140, Glu-155, Asn-170, and Asn-224 together coordinate UDP-N-acetyl-alpha-D-glucosamine. Asn-224 contacts Mg(2+). Residues 227–247 form a linker region; the sequence is KQLAMANGILQNRVKDHWMAQ. The interval 248–453 is N-acetyltransferase; it reads GVTLIDPDSI…EWKKTIESKK (206 aa). 2 residues coordinate UDP-N-acetyl-alpha-D-glucosamine: Arg-329 and Lys-347. Residue His-359 is the Proton acceptor of the active site. The UDP-N-acetyl-alpha-D-glucosamine site is built by Tyr-362 and Asn-373. Acetyl-CoA is bound by residues Ala-376, 382 to 383, Ala-419, and Arg-436; that span reads NY.

In the N-terminal section; belongs to the N-acetylglucosamine-1-phosphate uridyltransferase family. It in the C-terminal section; belongs to the transferase hexapeptide repeat family. Homotrimer. It depends on Mg(2+) as a cofactor.

Its subcellular location is the cytoplasm. The catalysed reaction is alpha-D-glucosamine 1-phosphate + acetyl-CoA = N-acetyl-alpha-D-glucosamine 1-phosphate + CoA + H(+). It carries out the reaction N-acetyl-alpha-D-glucosamine 1-phosphate + UTP + H(+) = UDP-N-acetyl-alpha-D-glucosamine + diphosphate. The protein operates within nucleotide-sugar biosynthesis; UDP-N-acetyl-alpha-D-glucosamine biosynthesis; N-acetyl-alpha-D-glucosamine 1-phosphate from alpha-D-glucosamine 6-phosphate (route II): step 2/2. It functions in the pathway nucleotide-sugar biosynthesis; UDP-N-acetyl-alpha-D-glucosamine biosynthesis; UDP-N-acetyl-alpha-D-glucosamine from N-acetyl-alpha-D-glucosamine 1-phosphate: step 1/1. Its pathway is bacterial outer membrane biogenesis; LPS lipid A biosynthesis. Functionally, catalyzes the last two sequential reactions in the de novo biosynthetic pathway for UDP-N-acetylglucosamine (UDP-GlcNAc). The C-terminal domain catalyzes the transfer of acetyl group from acetyl coenzyme A to glucosamine-1-phosphate (GlcN-1-P) to produce N-acetylglucosamine-1-phosphate (GlcNAc-1-P), which is converted into UDP-GlcNAc by the transfer of uridine 5-monophosphate (from uridine 5-triphosphate), a reaction catalyzed by the N-terminal domain. The polypeptide is Bifunctional protein GlmU (Rippkaea orientalis (strain PCC 8801 / RF-1) (Cyanothece sp. (strain PCC 8801))).